The sequence spans 167 residues: Leptin (167 aa).

Residues 1–21 (MRCGSLCRFLWLWSCLSYIEA) form the signal peptide. C117 and C167 are oxidised to a cystine.

This sequence belongs to the leptin family.

It is found in the secreted. Its function is as follows. Key player in the regulation of energy balance and body weight control. Once released into the circulation, has central and peripheral effects by binding LEPR, found in many tissues, which results in the activation of several major signaling pathways. In the hypothalamus, acts as an appetite-regulating factor that induces a decrease in food intake and an increase in energy consumption by inducing anorexinogenic factors and suppressing orexigenic neuropeptides, also regulates bone mass and secretion of hypothalamo-pituitary-adrenal hormones. In the periphery, increases basal metabolism, influences reproductive function, regulates pancreatic beta-cell function and insulin secretion, is pro-angiogenic for endothelial cell and affects innate and adaptive immunity. In the arcuate nucleus of the hypothalamus, activates by depolarization POMC neurons inducing FOS and SOCS3 expression to release anorexigenic peptides and inhibits by hyperpolarization NPY neurons inducing SOCS3 with a consequent reduction on release of orexigenic peptides. In addition to its known satiety inducing effect, has a modulatory role in nutrient absorption. In the intestine, reduces glucose absorption by enterocytes by activating PKC and leading to a sequential activation of p38, PI3K and ERK signaling pathways which exerts an inhibitory effect on glucose absorption. Acts as a growth factor on certain tissues, through the activation of different signaling pathways increases expression of genes involved in cell cycle regulation such as CCND1, via JAK2-STAT3 pathway, or VEGFA, via MAPK1/3 and PI3K-AKT1 pathways. May also play an apoptotic role via JAK2-STAT3 pathway and up-regulation of BIRC5 expression. Pro-angiogenic, has mitogenic activity on vascular endothelial cells and plays a role in matrix remodeling by regulating the expression of matrix metalloproteinases (MMPs) and tissue inhibitors of metalloproteinases (TIMPs). In innate immunity, modulates the activity and function of neutrophils by increasing chemotaxis and the secretion of oxygen radicals. Increases phagocytosis by macrophages and enhances secretion of pro-inflammatory mediators. Increases cytotoxic ability of NK cells. Plays a pro-inflammatory role, in synergy with IL1B, by inducing NOS2 which promotes the production of IL6, IL8 and Prostaglandin E2, through a signaling pathway that involves JAK2, PI3K, MAP2K1/MEK1 and MAPK14/p38. In adaptive immunity, promotes the switch of memory T-cells towards T helper-1 cell immune responses. Increases CD4(+)CD25(-) T-cell proliferation and reduces autophagy during TCR (T-cell receptor) stimulation, through MTOR signaling pathway activation and BCL2 up-regulation. The protein is Leptin (LEP) of Phoca vitulina (Harbor seal).